The primary structure comprises 191 residues: Thiol:disulfide interchange protein TxlA (191 aa).

A helical membrane pass occupies residues 14 to 30; the sequence is ILVIAAALVLTILVVLG. The Thioredoxin domain maps to 27–148; that stretch reads VVLGSRQPSA…LAANLDALVE (122 aa). A disulfide bridge connects residues C69 and C72. Residues 165 to 185 show a composition bias toward polar residues; that stretch reads SADLQPSRSSQTDPRSHSGQV. The tract at residues 165-191 is disordered; the sequence is SADLQPSRSSQTDPRSHSGQVQDGVLD.

It belongs to the thioredoxin family.

It is found in the cell membrane. In terms of biological role, required for disulfide bond formation in some proteins. Acts by transferring its disulfide bond to other proteins and is reduced in the process. The chain is Thiol:disulfide interchange protein TxlA (txlA) from Synechococcus elongatus (strain ATCC 33912 / PCC 7942 / FACHB-805) (Anacystis nidulans R2).